The primary structure comprises 469 residues: Glutamate--tRNA ligase (469 aa).

The 'HIGH' region signature appears at 11–21; sequence PSPTGFIHLGN. A compositionally biased stretch (basic and acidic residues) spans 118–131; sequence GEKPRYDGTWRPEP. Positions 118 to 139 are disordered; it reads GEKPRYDGTWRPEPGKVLPEPP. The 'KMSKS' region motif lies at 243–247; the sequence is KMSKR. Residue Lys246 participates in ATP binding.

It belongs to the class-I aminoacyl-tRNA synthetase family. Glutamate--tRNA ligase type 1 subfamily. As to quaternary structure, monomer.

The protein localises to the cytoplasm. It catalyses the reaction tRNA(Glu) + L-glutamate + ATP = L-glutamyl-tRNA(Glu) + AMP + diphosphate. Functionally, catalyzes the attachment of glutamate to tRNA(Glu) in a two-step reaction: glutamate is first activated by ATP to form Glu-AMP and then transferred to the acceptor end of tRNA(Glu). In Burkholderia mallei (strain NCTC 10247), this protein is Glutamate--tRNA ligase.